The following is a 130-amino-acid chain: MKDWLDEIKWNSDGLVPAIAQDHKTGRVLMMAWMNRESLALTAAEHRAIYWSRSRGKLWRKGEESGHVQKLHEMRLDCDADVIILMVEQLGHIACHTGRESCFYRVFEDGQWKTVDPVLKDPNAIYSAGH.

Position 77 (aspartate 77) interacts with Mg(2+). Residue cysteine 78 participates in Zn(2+) binding. The Mg(2+) site is built by aspartate 79 and aspartate 81. 2 residues coordinate Zn(2+): cysteine 95 and cysteine 102.

This sequence belongs to the PRA-CH family. In terms of assembly, homodimer. Requires Mg(2+) as cofactor. The cofactor is Zn(2+).

It is found in the cytoplasm. It catalyses the reaction 1-(5-phospho-beta-D-ribosyl)-5'-AMP + H2O = 1-(5-phospho-beta-D-ribosyl)-5-[(5-phospho-beta-D-ribosylamino)methylideneamino]imidazole-4-carboxamide. Its pathway is amino-acid biosynthesis; L-histidine biosynthesis; L-histidine from 5-phospho-alpha-D-ribose 1-diphosphate: step 3/9. Catalyzes the hydrolysis of the adenine ring of phosphoribosyl-AMP. In Pseudomonas entomophila (strain L48), this protein is Phosphoribosyl-AMP cyclohydrolase.